The sequence spans 539 residues: Chaperonin GroEL (539 aa).

ATP is bound by residues 29-32 (TLGP), 86-90 (DGTTT), G413, 476-478 (NAA), and D492.

It belongs to the chaperonin (HSP60) family. As to quaternary structure, forms a cylinder of 14 subunits composed of two heptameric rings stacked back-to-back. Interacts with the co-chaperonin GroES.

The protein localises to the cytoplasm. The enzyme catalyses ATP + H2O + a folded polypeptide = ADP + phosphate + an unfolded polypeptide.. Together with its co-chaperonin GroES, plays an essential role in assisting protein folding. The GroEL-GroES system forms a nano-cage that allows encapsulation of the non-native substrate proteins and provides a physical environment optimized to promote and accelerate protein folding. The chain is Chaperonin GroEL from Streptococcus thermophilus (strain CNRZ 1066).